Reading from the N-terminus, the 532-residue chain is Cytochrome P450 monooxygenase criE (532 aa).

The helical transmembrane segment at 18-38 (VSPAALSWAVVAVYIGTFFWL) threads the bilayer. C441 contributes to the heme binding site.

It belongs to the cytochrome P450 family. Requires heme as cofactor.

The protein resides in the membrane. The catalysed reaction is preechinulin + reduced [NADPH--hemoprotein reductase] + O2 = neoechinulin A + oxidized [NADPH--hemoprotein reductase] + 2 H2O + H(+). Its pathway is secondary metabolite biosynthesis. It participates in alkaloid biosynthesis. In terms of biological role, cytochrome P450 monooxygenase; part of the gene cluster that mediates the biosynthesis of echinulin family alkaloid. The pathway begins with the biosynthesis of the cyclic dipeptide cyclo-L-Trp-L-Ala (cyclo-TA) by the NRPS criC via condensation of L-alanine and L-tryptophan. The prenyltransferase criA then catalyzes the first prenylation step, a reverse prenylation reaction at C2, to yield preechinulin. Preechinulin is the substrate of the cytochrome P450 monooxygenase criE that catalyzes the formation of the double bond between C10 and C11 to produce neoechulin A. The unique prenyltransferase criF functions as a competitive enzyme with criE for preechinulin metabolization and uses preechinulin for effective regiospecific prenylations. Preechinulin is prenylated by criF at C5 or C7. C7-prenylation leads to accumulation of tardioxopiperazine B without further modification by criF. In contrast, the C5-prenylated tardioxopiperazine A can be prenylated again by criF, predominantly at C7 to form echinulin or less frequently at C4 to give variecolorin L. CriF also accepts neoechilunin A to produce varlecolorin G (prenylation at C5) or isoechinulin A (prenylation at C7). CriF further converts isoechinulin A into dehydroechinulin. Moreover, a yet unidentified enzyme can also convert neoechilunin A into neoechilunin B by introducing a double bond between positions C14 and C17 and thus provides a further substrate to criF for C5 and C7 prenylation. In Aspergillus cristatus (Chinese Fuzhuan brick tea-fermentation fungus), this protein is Cytochrome P450 monooxygenase criE.